The chain runs to 246 residues: Dihydromethanopterin reductase (acceptor) (246 aa).

2 4Fe-4S ferredoxin-type domains span residues 150–178 and 179–208; these read LPYA…VKRD and NFVE…EGKE. [4Fe-4S] cluster contacts are provided by cysteine 159, cysteine 162, cysteine 165, cysteine 169, cysteine 188, cysteine 191, cysteine 194, and cysteine 198.

In terms of assembly, homodimer. It depends on [4Fe-4S] cluster as a cofactor.

The catalysed reaction is 5,6,7,8-tetrahydromethanopterin + A = 7,8-dihydromethanopterin + AH2. The protein operates within cofactor biosynthesis; 5,6,7,8-tetrahydromethanopterin biosynthesis. Involved in the biosynthesis of tetrahydromethanopterin, a coenzyme used in methanogenesis. Catalyzes the reduction of dihydromethanopterin (H(2)MPT) to tetrahydromethanopterin (H(4)MPT). Ferredoxin may serve as an electron donor. In Methanocaldococcus jannaschii (strain ATCC 43067 / DSM 2661 / JAL-1 / JCM 10045 / NBRC 100440) (Methanococcus jannaschii), this protein is Dihydromethanopterin reductase (acceptor).